The following is a 60-amino-acid chain: Large ribosomal subunit protein bL32 (60 aa).

The disordered stretch occupies residues Met1 to Leu27. The span at Lys13–Lys25 shows a compositional bias: basic residues.

This sequence belongs to the bacterial ribosomal protein bL32 family.

This is Large ribosomal subunit protein bL32 from Protochlamydia amoebophila (strain UWE25).